The sequence spans 71 residues: Large ribosomal subunit protein uL29 (71 aa).

The protein belongs to the universal ribosomal protein uL29 family.

This is Large ribosomal subunit protein uL29 from Rickettsia africae (strain ESF-5).